We begin with the raw amino-acid sequence, 315 residues long: PIH1 domain-containing protein 2 (315 aa).

This sequence belongs to the PIH1 family.

In Homo sapiens (Human), this protein is PIH1 domain-containing protein 2 (PIH1D2).